Consider the following 118-residue polypeptide: Small ribosomal subunit protein uS13 (118 aa).

Positions 94 to 118 (GLPVRGQRTKTNARTRKGPRKPIKK) are disordered.

The protein belongs to the universal ribosomal protein uS13 family. Part of the 30S ribosomal subunit. Forms a loose heterodimer with protein S19. Forms two bridges to the 50S subunit in the 70S ribosome.

Functionally, located at the top of the head of the 30S subunit, it contacts several helices of the 16S rRNA. In the 70S ribosome it contacts the 23S rRNA (bridge B1a) and protein L5 of the 50S subunit (bridge B1b), connecting the 2 subunits; these bridges are implicated in subunit movement. Contacts the tRNAs in the A and P-sites. The chain is Small ribosomal subunit protein uS13 from Erwinia tasmaniensis (strain DSM 17950 / CFBP 7177 / CIP 109463 / NCPPB 4357 / Et1/99).